A 129-amino-acid polypeptide reads, in one-letter code: Lysozyme C, milk isozyme (129 aa).

The 129-residue stretch at 1–129 (KVFSKCELAH…LSEYLASCNL (129 aa)) folds into the C-type lysozyme domain. 4 cysteine pairs are disulfide-bonded: C6–C127, C30–C115, C65–C80, and C76–C94. Catalysis depends on residues E35 and D53. Positions 82, 85, 87, 90, and 91 each coordinate Ca(2+).

The protein belongs to the glycosyl hydrolase 22 family. In terms of assembly, monomer. It depends on Ca(2+) as a cofactor.

It catalyses the reaction Hydrolysis of (1-&gt;4)-beta-linkages between N-acetylmuramic acid and N-acetyl-D-glucosamine residues in a peptidoglycan and between N-acetyl-D-glucosamine residues in chitodextrins.. Functionally, lysozymes have primarily a bacteriolytic function; those in tissues and body fluids are associated with the monocyte-macrophage system and enhance the activity of immunoagents. In Equus caballus (Horse), this protein is Lysozyme C, milk isozyme (LYZ).